The chain runs to 643 residues: 1-deoxy-D-xylulose-5-phosphate synthase (643 aa).

Thiamine diphosphate-binding positions include His-78 and 119–121 (AHS). Asp-150 lines the Mg(2+) pocket. Residues 151–152 (GA), Asn-179, Tyr-288, and Glu-370 contribute to the thiamine diphosphate site. Asn-179 is a binding site for Mg(2+).

It belongs to the transketolase family. DXPS subfamily. As to quaternary structure, homodimer. Requires Mg(2+) as cofactor. Thiamine diphosphate serves as cofactor.

The enzyme catalyses D-glyceraldehyde 3-phosphate + pyruvate + H(+) = 1-deoxy-D-xylulose 5-phosphate + CO2. It functions in the pathway metabolic intermediate biosynthesis; 1-deoxy-D-xylulose 5-phosphate biosynthesis; 1-deoxy-D-xylulose 5-phosphate from D-glyceraldehyde 3-phosphate and pyruvate: step 1/1. Catalyzes the acyloin condensation reaction between C atoms 2 and 3 of pyruvate and glyceraldehyde 3-phosphate to yield 1-deoxy-D-xylulose-5-phosphate (DXP). This is 1-deoxy-D-xylulose-5-phosphate synthase from Xanthobacter autotrophicus (strain ATCC BAA-1158 / Py2).